Here is a 663-residue protein sequence, read N- to C-terminus: Pyoverdine export ATP-binding/permease protein PvdT (663 aa).

Positions 11–250 constitute an ABC transporter domain; sequence IELRDIRKRY…PSAGVERHLQ (240 aa). Residue 48–55 coordinates ATP; the sequence is GASGSGKS. The next 4 helical transmembrane spans lie at 292 to 312, 545 to 565, 598 to 618, and 626 to 646; these read ALTL…LAVG, IAAI…LMTV, VVGG…LLLG, and LSAI…FGFM.

The protein belongs to the ABC transporter superfamily. Macrolide exporter (TC 3.A.1.122) family. In terms of assembly, part of the tripartite efflux system PvdRT-OpmQ, which is composed of an inner membrane component with both ATPase and permease domains, PvdT, a periplasmic membrane fusion protein, PvdR, and an outer membrane component, OpmQ.

The protein resides in the cell inner membrane. Part of the tripartite efflux system PvdRT-OpmQ required for the secretion into the extracellular milieu of the siderophore pyoverdine (PVD), which is involved in iron acquisition. This subunit binds PVD and drives its secretion by hydrolyzing ATP. The system is responsible for export of newly synthesized PVD after the final steps of biosynthesis have taken place in the periplasm. It is also responsible for recycling of PVD after internalization of ferri-PVD into the periplasm by the outer-membrane receptor FpvA and release of iron from PVD, thus making PVD available for new cycles of iron uptake. In addition, can expel unwanted metals complexed with PVD from the periplasm into the extracellular medium. This chain is Pyoverdine export ATP-binding/permease protein PvdT, found in Pseudomonas aeruginosa (strain ATCC 15692 / DSM 22644 / CIP 104116 / JCM 14847 / LMG 12228 / 1C / PRS 101 / PAO1).